We begin with the raw amino-acid sequence, 651 residues long: Cysteine-rich receptor-like protein kinase 42 (651 aa).

The signal sequence occupies residues 1 to 28; that stretch reads MRCLTKTRSFHYVIIFYSFFFLPFLSSS. Residues 29-251 lie on the Extracellular side of the membrane; it reads SDDQRTTVSG…HHKFHVLFNK (223 aa). 2 Gnk2-homologous domains span residues 35–135 and 137–236; these read TVSG…TYEF and DESV…DHKF. 2 N-linked (GlcNAc...) asparagine glycosylation sites follow: N79 and N151. A helical membrane pass occupies residues 252–272; sequence GVIVAIVLTTSAFVMLILLAT. The Cytoplasmic segment spans residues 273 to 651; it reads YVIMTKVSKT…SSESSTTRTI (379 aa). The Protein kinase domain maps to 315–604; the sequence is FSHKKMLGQG…IPSPTSPPFL (290 aa). ATP contacts are provided by residues 321 to 329 and K343; that span reads LGQGGNGTV. Residue Y388 is modified to Phosphotyrosine. The Proton acceptor role is filled by D440. Residues S444 and S473 each carry the phosphoserine modification. Phosphothreonine is present on residues T474 and T479. A Phosphotyrosine modification is found at Y487.

Belongs to the protein kinase superfamily. Ser/Thr protein kinase family. CRK subfamily.

It is found in the membrane. The catalysed reaction is L-seryl-[protein] + ATP = O-phospho-L-seryl-[protein] + ADP + H(+). The enzyme catalyses L-threonyl-[protein] + ATP = O-phospho-L-threonyl-[protein] + ADP + H(+). In Arabidopsis thaliana (Mouse-ear cress), this protein is Cysteine-rich receptor-like protein kinase 42 (CRK42).